The following is a 401-amino-acid chain: 8-amino-7-oxononanoate synthase (401 aa).

Substrate is bound at residue arginine 24. 111–112 (GF) serves as a coordination point for pyridoxal 5'-phosphate. Histidine 137 is a binding site for substrate. Residues serine 183, histidine 211, and threonine 240 each contribute to the pyridoxal 5'-phosphate site. N6-(pyridoxal phosphate)lysine is present on lysine 243. A substrate-binding site is contributed by threonine 357.

This sequence belongs to the class-II pyridoxal-phosphate-dependent aminotransferase family. BioF subfamily. Homodimer. Requires pyridoxal 5'-phosphate as cofactor.

It catalyses the reaction 6-carboxyhexanoyl-[ACP] + L-alanine + H(+) = (8S)-8-amino-7-oxononanoate + holo-[ACP] + CO2. It participates in cofactor biosynthesis; biotin biosynthesis. Catalyzes the decarboxylative condensation of pimeloyl-[acyl-carrier protein] and L-alanine to produce 8-amino-7-oxononanoate (AON), [acyl-carrier protein], and carbon dioxide. The sequence is that of 8-amino-7-oxononanoate synthase from Xanthomonas euvesicatoria pv. vesicatoria (strain 85-10) (Xanthomonas campestris pv. vesicatoria).